The following is a 271-amino-acid chain: Zinc finger protein 501 (271 aa).

9 consecutive C2H2-type zinc fingers follow at residues 22-44 (SKCS…QRIH), 50-72 (YVCS…LRIH), 78-100 (YKCN…LRIH), 106-128 (YKCN…QRIH), 134-156 (YKCT…QRSH), 162-184 (FKCN…QRIH), 190-212 (YTCT…ERTH), 218-240 (YKCS…YRIH), and 246-268 (YECV…QRLH).

This sequence belongs to the krueppel C2H2-type zinc-finger protein family.

It localises to the nucleus. Its subcellular location is the nucleolus. May be involved in transcriptional regulation. Essential for Golgi structural integrity. This Homo sapiens (Human) protein is Zinc finger protein 501 (ZNF501).